Consider the following 68-residue polypeptide: Small ribosomal subunit protein bS21 (68 aa).

The protein belongs to the bacterial ribosomal protein bS21 family.

The chain is Small ribosomal subunit protein bS21 from Jannaschia sp. (strain CCS1).